A 156-amino-acid polypeptide reads, in one-letter code: Male-specific protein scotti (156 aa).

The disordered stretch occupies residues 26–48 (TADAGDDADTLEDGQQQQQQQHQ). The N-linked (GlcNAc...) asparagine glycan is linked to asparagine 137.

Belongs to the male-specific scotti family.

Functionally, post-meiotically transcribed gene that has a role in late spermiogenesis; required for actin cone progression during spermatid individualization. The chain is Male-specific protein scotti from Drosophila erecta (Fruit fly).